The primary structure comprises 189 residues: Isopentenyl-diphosphate Delta-isomerase (189 aa).

Positions 27 and 34 each coordinate Mn(2+). Residues 32 to 171 form the Nudix hydrolase domain; that stretch reads PLHFAFSTYI…PFVFSPWMVD (140 aa). The active site involves cysteine 69. Histidine 71 serves as a coordination point for Mn(2+). A Mg(2+)-binding site is contributed by glutamate 89. Residues glutamate 119 and glutamate 121 each coordinate Mn(2+). Glutamate 121 is an active-site residue.

The protein belongs to the IPP isomerase type 1 family. It depends on Mg(2+) as a cofactor. Requires Mn(2+) as cofactor.

It localises to the cytoplasm. The catalysed reaction is isopentenyl diphosphate = dimethylallyl diphosphate. Its pathway is isoprenoid biosynthesis; dimethylallyl diphosphate biosynthesis; dimethylallyl diphosphate from isopentenyl diphosphate: step 1/1. Functionally, catalyzes the 1,3-allylic rearrangement of the homoallylic substrate isopentenyl (IPP) to its highly electrophilic allylic isomer, dimethylallyl diphosphate (DMAPP). This Corynebacterium glutamicum (strain R) protein is Isopentenyl-diphosphate Delta-isomerase.